Reading from the N-terminus, the 300-residue chain is MMDQSIADAFPEVQVLEHEPLSKYTNTQTGGPADLLVFPESVTETKRLVLWAKETDTPLTIIGNASNLIVRDGGIRGLTLILTKMDDIQVNGNEVVAEAGAALIQTTEVAYQAGLTGLEFAAGIPGSIGGAVFMNAGAYDGEISEVVTSAEILTRDGEIKNLNNHELDFGYRHSSVQDYQDVVLSATFKLRSGDANKIRARMDELNRLRASKQPLEYPSCGSVFKRPTGYFTGKLIHEAGLQGFTVGGAQVSMKHAGFIINVGGATATDYMDVIHHVQATVLKQFGVTLETEVRIIGEEK.

The region spanning 29–193 (TGGPADLLVF…LSATFKLRSG (165 aa)) is the FAD-binding PCMH-type domain. R172 is a catalytic residue. S222 serves as the catalytic Proton donor. Residue E292 is part of the active site.

This sequence belongs to the MurB family. FAD is required as a cofactor.

The protein resides in the cytoplasm. It catalyses the reaction UDP-N-acetyl-alpha-D-muramate + NADP(+) = UDP-N-acetyl-3-O-(1-carboxyvinyl)-alpha-D-glucosamine + NADPH + H(+). The protein operates within cell wall biogenesis; peptidoglycan biosynthesis. Cell wall formation. The sequence is that of UDP-N-acetylenolpyruvoylglucosamine reductase from Pediococcus pentosaceus (strain ATCC 25745 / CCUG 21536 / LMG 10740 / 183-1w).